The chain runs to 406 residues: Succinylornithine transaminase (406 aa).

Position 252 is an N6-(pyridoxal phosphate)lysine (K252).

It belongs to the class-III pyridoxal-phosphate-dependent aminotransferase family. AstC subfamily. The cofactor is pyridoxal 5'-phosphate.

The enzyme catalyses N(2)-succinyl-L-ornithine + 2-oxoglutarate = N-succinyl-L-glutamate 5-semialdehyde + L-glutamate. It participates in amino-acid degradation; L-arginine degradation via AST pathway; L-glutamate and succinate from L-arginine: step 3/5. Catalyzes the transamination of N(2)-succinylornithine and alpha-ketoglutarate into N(2)-succinylglutamate semialdehyde and glutamate. Can also act as an acetylornithine aminotransferase. The sequence is that of Succinylornithine transaminase from Escherichia coli O7:K1 (strain IAI39 / ExPEC).